We begin with the raw amino-acid sequence, 433 residues long: Serine/threonine-protein kinase Sgk1 (433 aa).

Residues 66–92 (QDVELMNSNPSPPPSPSQQINLGPSSN) are disordered. The segment covering 83 to 92 (QQINLGPSSN) has biased composition (polar residues). One can recognise a Protein kinase domain in the interval 100–357 (FDFLKVIGKG…FTEIKNHMFF (258 aa)). ATP is bound by residues 106–114 (IGKGSFGKV) and K129. D224 acts as the Proton acceptor in catalysis. The AGC-kinase C-terminal domain maps to 358-433 (SPINWDDLNA…SYAPAMDSYL (76 aa)).

Belongs to the protein kinase superfamily. AGC Ser/Thr protein kinase family.

The protein localises to the cytoplasm. Its subcellular location is the nucleus. It is found in the endoplasmic reticulum. The catalysed reaction is L-seryl-[protein] + ATP = O-phospho-L-seryl-[protein] + ADP + H(+). It catalyses the reaction L-threonyl-[protein] + ATP = O-phospho-L-threonyl-[protein] + ADP + H(+). In terms of biological role, protein kinase that may play an important role in cellular stress response. May be involved in the regulation of processes such as cell survival, neuronal excitability and renal sodium excretion. In Danio rerio (Zebrafish), this protein is Serine/threonine-protein kinase Sgk1 (sgk1).